We begin with the raw amino-acid sequence, 440 residues long: Cytochrome c biogenesis protein Ccs1 (440 aa).

The next 3 membrane-spanning stretches (helical) occupy residues 19-39 (LRLAIWLLASIGILIALGTFI), 78-98 (NIWFFGIVGFFASSLLACTYT), and 164-184 (VGPILVHFSILFVLFGSACGA).

It belongs to the Ccs1/CcsB family. In terms of assembly, may interact with CcsA.

The protein resides in the plastid. The protein localises to the chloroplast thylakoid membrane. Functionally, required during biogenesis of c-type cytochromes (cytochrome c6 and cytochrome f) at the step of heme attachment. This Emiliania huxleyi (Coccolithophore) protein is Cytochrome c biogenesis protein Ccs1.